We begin with the raw amino-acid sequence, 39 residues long: Photosystem II reaction center protein J (39 aa).

A helical membrane pass occupies residues 7-27 (IPLWIVAVVVGLGVVTVVGLF).

Belongs to the PsbJ family. As to quaternary structure, PSII is composed of 1 copy each of membrane proteins PsbA, PsbB, PsbC, PsbD, PsbE, PsbF, PsbH, PsbI, PsbJ, PsbK, PsbL, PsbM, PsbT, PsbX, PsbY, PsbZ, Psb30/Ycf12, peripheral proteins PsbO, CyanoQ (PsbQ), PsbU, PsbV and a large number of cofactors. It forms dimeric complexes.

The protein localises to the cellular thylakoid membrane. Its function is as follows. One of the components of the core complex of photosystem II (PSII). PSII is a light-driven water:plastoquinone oxidoreductase that uses light energy to abstract electrons from H(2)O, generating O(2) and a proton gradient subsequently used for ATP formation. It consists of a core antenna complex that captures photons, and an electron transfer chain that converts photonic excitation into a charge separation. In Synechococcus sp. (strain JA-3-3Ab) (Cyanobacteria bacterium Yellowstone A-Prime), this protein is Photosystem II reaction center protein J.